Here is a 683-residue protein sequence, read N- to C-terminus: Phenoloxidase 3 (683 aa).

Positions 1-48 (MADKKNLLLLFDHPTEPVFMDKGGNGTVFDVPDSYVTDRYNQMCKKVQ) are excised as a propeptide. Residues H209, H213, and H239 each contribute to the Cu cation site. The active-site Proton acceptor is the E351. Residue N358 is glycosylated (N-linked (GlcNAc...) asparagine). Positions 366, 370, and 406 each coordinate Cu cation. Residues N492 and N546 are each glycosylated (N-linked (GlcNAc...) asparagine). 2 cysteine pairs are disulfide-bonded: C574/C617 and C576/C624.

This sequence belongs to the tyrosinase family. Requires Cu(2+) as cofactor. Upon activation, a trypsin type protease cleaves prophenol oxidase to yield the active enzyme.

It localises to the secreted. The catalysed reaction is 2 L-dopa + O2 = 2 L-dopaquinone + 2 H2O. It catalyses the reaction L-tyrosine + O2 = L-dopaquinone + H2O. In terms of biological role, this is a copper-containing oxidase that functions in the formation of pigments such as melanins and other polyphenolic compounds. Catalyzes the rate-limiting conversions of tyrosine to DOPA, DOPA to DOPA-quinone and possibly 5,6 dihydroxyindole to indole-5'6 quinone. The sequence is that of Phenoloxidase 3 (PPO3) from Drosophila melanogaster (Fruit fly).